The chain runs to 196 residues: Small ribosomal subunit protein uS4c (196 aa).

The S4 RNA-binding domain occupies 89 to 157 (MRLDNILFRL…VQNYIASSDP (69 aa)).

It belongs to the universal ribosomal protein uS4 family. As to quaternary structure, part of the 30S ribosomal subunit. Contacts protein S5. The interaction surface between S4 and S5 is involved in control of translational fidelity.

It is found in the plastid. The protein localises to the chloroplast. Its function is as follows. One of the primary rRNA binding proteins, it binds directly to 16S rRNA where it nucleates assembly of the body of the 30S subunit. With S5 and S12 plays an important role in translational accuracy. The sequence is that of Small ribosomal subunit protein uS4c (rps4) from Elymus canadensis (Canada wild rye).